We begin with the raw amino-acid sequence, 464 residues long: Glycine--tRNA ligase (464 aa).

Substrate contacts are provided by Arg-104 and Glu-175. ATP-binding positions include 207-209, 217-222, 292-293, and 336-339; these read RNE, FRTREF, EL, and GVNR. 222–226 contacts substrate; the sequence is FEQME. Residue 332-336 participates in substrate binding; it reads EPALG.

This sequence belongs to the class-II aminoacyl-tRNA synthetase family. In terms of assembly, homodimer.

It is found in the cytoplasm. It catalyses the reaction tRNA(Gly) + glycine + ATP = glycyl-tRNA(Gly) + AMP + diphosphate. Functionally, catalyzes the attachment of glycine to tRNA(Gly). The protein is Glycine--tRNA ligase of Leptospira interrogans serogroup Icterohaemorrhagiae serovar Lai (strain 56601).